Reading from the N-terminus, the 83-residue chain is Small ribosomal subunit protein bS16 (83 aa).

It belongs to the bacterial ribosomal protein bS16 family.

The polypeptide is Small ribosomal subunit protein bS16 (Pseudomonas fluorescens (strain ATCC BAA-477 / NRRL B-23932 / Pf-5)).